The primary structure comprises 568 residues: T-complex protein 1 subunit theta (568 aa).

Lysine 15 participates in a covalent cross-link: Glycyl lysine isopeptide (Lys-Gly) (interchain with G-Cter in ubiquitin). Serine 505 bears the Phosphoserine mark.

Belongs to the TCP-1 chaperonin family. Heterooligomeric complex of about 850 to 900 kDa that forms two stacked rings, 12 to 16 nm in diameter.

Its subcellular location is the cytoplasm. Functionally, molecular chaperone; assists the folding of proteins upon ATP hydrolysis. Known to play a role, in vitro, in the folding of actin and tubulin. In yeast may play a role in mitotic spindle formation. This chain is T-complex protein 1 subunit theta (CCT8), found in Saccharomyces cerevisiae (strain ATCC 204508 / S288c) (Baker's yeast).